A 457-amino-acid chain; its full sequence is tRNA modification GTPase MnmE (457 aa).

Residues R22, E83, and R122 each coordinate (6S)-5-formyl-5,6,7,8-tetrahydrofolate. Positions 219 to 378 (GLATAIIGRP…LEEAIKALFF (160 aa)) constitute a TrmE-type G domain. N229 contributes to the K(+) binding site. Residues 229 to 234 (NVGKSS), 248 to 254 (TDIAGTT), and 273 to 276 (DTAG) each bind GTP. S233 lines the Mg(2+) pocket. T248, I250, and T253 together coordinate K(+). Mg(2+) is bound at residue T254. Residue K457 coordinates (6S)-5-formyl-5,6,7,8-tetrahydrofolate.

It belongs to the TRAFAC class TrmE-Era-EngA-EngB-Septin-like GTPase superfamily. TrmE GTPase family. In terms of assembly, homodimer. Heterotetramer of two MnmE and two MnmG subunits. K(+) is required as a cofactor.

Its subcellular location is the cytoplasm. In terms of biological role, exhibits a very high intrinsic GTPase hydrolysis rate. Involved in the addition of a carboxymethylaminomethyl (cmnm) group at the wobble position (U34) of certain tRNAs, forming tRNA-cmnm(5)s(2)U34. This chain is tRNA modification GTPase MnmE, found in Listeria innocua serovar 6a (strain ATCC BAA-680 / CLIP 11262).